The primary structure comprises 139 residues: Protein archease (139 aa).

Ca(2+)-binding residues include D12, D138, and I139.

It belongs to the archease family.

Its function is as follows. Activates the tRNA-splicing ligase complex by facilitating the enzymatic turnover of catalytic subunit RtcB. Acts by promoting the guanylylation of RtcB, a key intermediate step in tRNA ligation. Can also alter the NTP specificity of RtcB such that ATP, dGTP or ITP is used efficiently. This is Protein archease from Saccharolobus islandicus (strain Y.G.57.14 / Yellowstone #1) (Sulfolobus islandicus).